The chain runs to 283 residues: Formamidopyrimidine-DNA glycosylase (283 aa).

Catalysis depends on Pro2, which acts as the Schiff-base intermediate with DNA. The active-site Proton donor is the Glu3. The active-site Proton donor; for beta-elimination activity is Lys58. DNA contacts are provided by His100, Arg119, and Arg162. The FPG-type zinc-finger motif lies at 247 to 283 (RVYGREGQPCVTPGCRGLVGRIVQSGRSSFHCPECQR). The active-site Proton donor; for delta-elimination activity is the Arg273.

Belongs to the FPG family. Monomer. The cofactor is Zn(2+).

The catalysed reaction is Hydrolysis of DNA containing ring-opened 7-methylguanine residues, releasing 2,6-diamino-4-hydroxy-5-(N-methyl)formamidopyrimidine.. It carries out the reaction 2'-deoxyribonucleotide-(2'-deoxyribose 5'-phosphate)-2'-deoxyribonucleotide-DNA = a 3'-end 2'-deoxyribonucleotide-(2,3-dehydro-2,3-deoxyribose 5'-phosphate)-DNA + a 5'-end 5'-phospho-2'-deoxyribonucleoside-DNA + H(+). In terms of biological role, involved in base excision repair of DNA damaged by oxidation or by mutagenic agents. Acts as a DNA glycosylase that recognizes and removes damaged bases. Has a preference for oxidized purines, such as 7,8-dihydro-8-oxoguanine (8-oxoG). Has AP (apurinic/apyrimidinic) lyase activity and introduces nicks in the DNA strand. Cleaves the DNA backbone by beta-delta elimination to generate a single-strand break at the site of the removed base with both 3'- and 5'-phosphates. The polypeptide is Formamidopyrimidine-DNA glycosylase (Cereibacter sphaeroides (strain ATCC 17025 / ATH 2.4.3) (Rhodobacter sphaeroides)).